The primary structure comprises 395 residues: Multidrug resistance protein MdtL (395 aa).

The next 12 membrane-spanning stretches (helical) occupy residues 4 to 24, 42 to 62, 69 to 89, 93 to 113, 131 to 151, 158 to 178, 217 to 237, 247 to 267, 271 to 291, 295 to 315, 328 to 350, and 355 to 377; these read FLLC…MYLV, IAFS…GKIA, PVAI…SRAS, LFLS…VVAF, LLNG…HLIM, SLFY…LFIL, VSVI…VMGF, ALTA…LGLF, TLML…SLAH, VTLF…GVAM, VASS…LAAI, and AMNM…IFSV.

This sequence belongs to the major facilitator superfamily. DHA1 family. MdtL (TC 2.A.1.2.22) subfamily.

Its subcellular location is the cell inner membrane. The chain is Multidrug resistance protein MdtL from Salmonella dublin (strain CT_02021853).